The following is a 116-amino-acid chain: Evasin P1180 (116 aa).

Residues 1 to 25 (MARNWSFRVIFVSAMWCALLKFATL) form the signal peptide. Cystine bridges form between cysteine 38–cysteine 58, cysteine 54–cysteine 95, cysteine 71–cysteine 100, and cysteine 90–cysteine 109. N-linked (GlcNAc...) asparagine glycans are attached at residues asparagine 45, asparagine 73, and asparagine 104.

The protein resides in the secreted. Functionally, salivary chemokine-binding protein which binds to host chemokines CCL2, CCL3, CCL4, CCL8 and CCL18. This is Evasin P1180 from Amblyomma triste (Neotropical tick).